Reading from the N-terminus, the 489-residue chain is Capsid protein (489 aa).

The segment at 79-144 (GETSEEESDS…QPKTIPGQKQ (66 aa)) is disordered. The span at 81–94 (TSEEESDSGEEPEF) shows a compositional bias: acidic residues. The segment covering 95 to 110 (EQVRMDRTGGTEIPKE) has biased composition (basic and acidic residues). Residues 122-125 (RKRK) carry the Nuclear localization signal motif. Residues 135–144 (QPKTIPGQKQ) show a composition bias toward polar residues. Residues 412-429 (CRCWICNIEGHYANECPN) form a CCHC-type zinc finger. The tract at residues 467–489 (EEEEETSTEESDGSSTSEDSDSD) is disordered.

It belongs to the caulimoviridae capsid protein family. In terms of assembly, interacts (via nuclear localization signal) with host importin alpha.

Its subcellular location is the virion. The protein resides in the host nucleus. Its function is as follows. Self assembles to form an icosahedral capsid, about 50 nm in diameter, nm, composed of 420 subunits of the viral capsid protein. The capsid encapsulates the genomic dsDNA. Following virus entry into host cell, provides nuclear import of the viral genome. Virus particles do not enter the nucleus, but dock at the nuclear membrane through the interaction with host importins. This is Capsid protein from Arabidopsis thaliana (Mouse-ear cress).